A 324-amino-acid chain; its full sequence is Probable pectinesterase A (324 aa).

An N-terminal signal peptide occupies residues 1–19; it reads MYLPSLVLGLLGFGLTAST. N-linked (GlcNAc...) asparagine glycosylation is present at Asn27. Residue Gln142 coordinates substrate. The active-site Proton donor is the Asp165. Asp186 functions as the Nucleophile in the catalytic mechanism. Arg246 and Trp248 together coordinate substrate.

It belongs to the pectinesterase family.

The protein resides in the secreted. It carries out the reaction [(1-&gt;4)-alpha-D-galacturonosyl methyl ester](n) + n H2O = [(1-&gt;4)-alpha-D-galacturonosyl](n) + n methanol + n H(+). It functions in the pathway glycan metabolism; pectin degradation; 2-dehydro-3-deoxy-D-gluconate from pectin: step 1/5. Involved in maceration and soft-rotting of plant tissue. The protein is Probable pectinesterase A (pmeA) of Aspergillus fumigatus (strain CBS 144.89 / FGSC A1163 / CEA10) (Neosartorya fumigata).